Reading from the N-terminus, the 186-residue chain is Large ribosomal subunit protein bL17 (186 aa).

The disordered stretch occupies residues Ser123–Asp186. Positions Glu139–Ala177 are enriched in low complexity.

This sequence belongs to the bacterial ribosomal protein bL17 family. As to quaternary structure, part of the 50S ribosomal subunit. Contacts protein L32.

The sequence is that of Large ribosomal subunit protein bL17 from Mycobacterium avium (strain 104).